The primary structure comprises 428 residues: MIIGIDDTDSNEGMCTTYLGALLLEELQEYGNIETLPLLVRLNPTIPYKTRGNAAVALKLKTDCPEKVIAHVTSRIEELARMECEKTNPGAVFIQDKDYGRLRPVLMRFLEEAVRDVIEIKKAKDLISILGIASKGFKNGRGLIGALAACGAMLDQDGLDFTFEHLAYRQKDRWGTPREVDKKSFFEADKETYPETWDTVDLTNRLVVCVPHSADPVLFGIRGESPEIVNKAASLIRAEPVERFAVYRTNQGTDMHLLPAQNIAETRDMHSYRLEGTVSAAPKTLEGGHVIFAVRDREGAEIDCAAFEPTKNFRSLIRKLVPGDLICLSGSVTSGTLNIEKIEIKSLAPVYREENPICPECGKHMKSSGKGQGFRCKKCGTDSPSKVRFEGDRDLDPGLYEVPPCARRHLAKPLVREERRDMRLNPAR.

The protein belongs to the TiaS family.

Its subcellular location is the cytoplasm. It catalyses the reaction cytidine(34) in tRNA(Ile2) + agmatine + ATP + H2O = 2-agmatinylcytidine(34) in tRNA(Ile2) + AMP + 2 phosphate + 2 H(+). In terms of biological role, ATP-dependent agmatine transferase that catalyzes the formation of 2-agmatinylcytidine (agm2C) at the wobble position (C34) of tRNA(Ile2), converting the codon specificity from AUG to AUA. In Methanosarcina mazei (strain ATCC BAA-159 / DSM 3647 / Goe1 / Go1 / JCM 11833 / OCM 88) (Methanosarcina frisia), this protein is tRNA(Ile2) 2-agmatinylcytidine synthetase TiaS.